We begin with the raw amino-acid sequence, 247 residues long: 1-(5-phosphoribosyl)-5-[(5-phosphoribosylamino)methylideneamino] imidazole-4-carboxamide isomerase (247 aa).

D8 functions as the Proton acceptor in the catalytic mechanism. D129 serves as the catalytic Proton donor.

The protein belongs to the HisA/HisF family.

Its subcellular location is the cytoplasm. It catalyses the reaction 1-(5-phospho-beta-D-ribosyl)-5-[(5-phospho-beta-D-ribosylamino)methylideneamino]imidazole-4-carboxamide = 5-[(5-phospho-1-deoxy-D-ribulos-1-ylimino)methylamino]-1-(5-phospho-beta-D-ribosyl)imidazole-4-carboxamide. Its pathway is amino-acid biosynthesis; L-histidine biosynthesis; L-histidine from 5-phospho-alpha-D-ribose 1-diphosphate: step 4/9. The sequence is that of 1-(5-phosphoribosyl)-5-[(5-phosphoribosylamino)methylideneamino] imidazole-4-carboxamide isomerase from Rhodospirillum centenum (strain ATCC 51521 / SW).